A 223-amino-acid polypeptide reads, in one-letter code: Flagellar L-ring protein (223 aa).

Residues 1 to 18 form the signal peptide; that stretch reads MKKSLMALIVVGSFLLSA. Cys-19 carries N-palmitoyl cysteine lipidation. Residue Cys-19 is the site of S-diacylglycerol cysteine attachment.

This sequence belongs to the FlgH family. In terms of assembly, the basal body constitutes a major portion of the flagellar organelle and consists of four rings (L,P,S, and M) mounted on a central rod.

It localises to the cell outer membrane. Its subcellular location is the bacterial flagellum basal body. In terms of biological role, assembles around the rod to form the L-ring and probably protects the motor/basal body from shearing forces during rotation. The sequence is that of Flagellar L-ring protein from Herminiimonas arsenicoxydans.